The sequence spans 731 residues: 1,4-alpha-glucan branching enzyme GlgB (731 aa).

The active-site Nucleophile is aspartate 411. Catalysis depends on glutamate 464, which acts as the Proton donor.

It belongs to the glycosyl hydrolase 13 family. GlgB subfamily. Monomer.

The enzyme catalyses Transfers a segment of a (1-&gt;4)-alpha-D-glucan chain to a primary hydroxy group in a similar glucan chain.. It functions in the pathway glycan biosynthesis; glycogen biosynthesis. Functionally, catalyzes the formation of the alpha-1,6-glucosidic linkages in glycogen by scission of a 1,4-alpha-linked oligosaccharide from growing alpha-1,4-glucan chains and the subsequent attachment of the oligosaccharide to the alpha-1,6 position. This Mycolicibacterium paratuberculosis (strain ATCC BAA-968 / K-10) (Mycobacterium paratuberculosis) protein is 1,4-alpha-glucan branching enzyme GlgB.